A 204-amino-acid chain; its full sequence is High mobility group-T protein (204 aa).

2 DNA-binding regions (HMG box) span residues Pro8–Ile78 and Pro94–Arg162. Positions Arg162–Glu204 are disordered. The segment covering Asp181–Glu204 has biased composition (acidic residues).

Belongs to the HMGB family.

It is found in the nucleus. It localises to the chromosome. Functionally, binds preferentially single-stranded DNA and unwinds double-stranded DNA. In Oncorhynchus mykiss (Rainbow trout), this protein is High mobility group-T protein.